Here is a 115-residue protein sequence, read N- to C-terminus: NAD(P)H-quinone oxidoreductase subunit M (115 aa).

This sequence belongs to the complex I NdhM subunit family. In terms of assembly, NDH-1 can be composed of about 15 different subunits; different subcomplexes with different compositions have been identified which probably have different functions.

The protein resides in the cellular thylakoid membrane. It carries out the reaction a plastoquinone + NADH + (n+1) H(+)(in) = a plastoquinol + NAD(+) + n H(+)(out). It catalyses the reaction a plastoquinone + NADPH + (n+1) H(+)(in) = a plastoquinol + NADP(+) + n H(+)(out). In terms of biological role, NDH-1 shuttles electrons from an unknown electron donor, via FMN and iron-sulfur (Fe-S) centers, to quinones in the respiratory and/or the photosynthetic chain. The immediate electron acceptor for the enzyme in this species is believed to be plastoquinone. Couples the redox reaction to proton translocation, and thus conserves the redox energy in a proton gradient. Cyanobacterial NDH-1 also plays a role in inorganic carbon-concentration. The polypeptide is NAD(P)H-quinone oxidoreductase subunit M (Prochlorococcus marinus subsp. pastoris (strain CCMP1986 / NIES-2087 / MED4)).